Reading from the N-terminus, the 880-residue chain is MKIFQIQCSSFKESRWQKSKCDNCLKFHIDINNNSKTSNTDTDFDANTNINSNINSNINSNININNSGNNNKNSNNIEITENIDNKAKIINKHIKTITNSKPIPIPIPTPTPISIKEKEKEKEKEKEKEKEKEKEKEKEMKSTINLRSEDTTSNKSTIVFTECLEYKGHQWRPNICVTCFSPKNKHKNVLPETSTPLISQSSQTSTITPSSSSTSTSTSSISTHKTANNKTVITYISSTTTTTTTSSSSSSPPSSSIAGITNPTSRSSSPILKSVPPSAYSNVVIPINNINNSNSNSSSGGGNNNNKSISTPSSPIISRPITNKINNNNNNNQPQLHYNQPQSSSVSTTSSPIIRPVLRRQFQSFPSNPKISKAILEQCNIINNNSNSNNSNNKDPVILCKYTIESQPKSNISVLKPTLVEFINQPDSKDDESSVKSPPLPVESQPIFNSKQSATMDGITTHKSVSITISTSTSPSSTTTTTSTTTSIIAEEPSSPILPTASPSSSSSSIITTATASTIPMSPSLPSIPFHEFETMESSTTTTLLSENNGGGGGSSCNDNSRRNSLNILPLRLKSFSFSAPQSDSMIEQPEDDPFFDFEDLSDDDDSNDNDDEELKEINGEKIIQQNDLTPTTTITSTTTILQSPTLEKTLSTTTTTTIPSPSTNSRSICNTLMDSTDSINNTNTNTNTNTNTNTNTNTNTNTNTNTNANINNKVSTTTTTTTTKRRSLKMDQFKEKEDEWDQGVDLTSFLKRKPTLQRDFSYCNNKVMEISSVKEEAKRLHGGTGYIHQFAFEAFKDILEAKQTQINRAFCSQKIDAPDCEMLINEINTAKKLLEDLLELNSNSSGSGNNSNDNSGSSSPSSSKTNTLNQQSICIKSEI.

10 disordered regions span residues 101–149, 191–224, 240–273, 294–350, 425–446, 470–508, 536–561, 580–613, 682–713, and 844–880; these read KPIP…LRSE, PETSTPLISQSSQTSTITPSSSSTSTSTSSISTH, TTTTTTSSSSSSPPSSSIAGITNPTSRSSSPILK, NSNS…STTS, QPDSKDDESSVKSPPLPVESQP, STSTSPSSTTTTTSTTTSIIAEEPSSPILPTASPSSSSS, MESSTTTTLLSENNGGGGGSSCNDNS, APQSDSMIEQPEDDPFFDFEDLSDDDDSNDNDDE, NTNTNTNTNTNTNTNTNTNTNTNTNTNANINN, and NSSGSGNNSNDNSGSSSPSSSKTNTLNQQSICIKSEI. Positions 113-147 form a coiled coil; the sequence is ISIKEKEKEKEKEKEKEKEKEKEKEKEMKSTINLR. The span at 115–149 shows a compositional bias: basic and acidic residues; the sequence is IKEKEKEKEKEKEKEKEKEKEKEKEMKSTINLRSE. Composition is skewed to low complexity over residues 193–223 and 240–256; these read TSTPLISQSSQTSTITPSSSSTSTSTSSIST and TTTTTTSSSSSSPPSSS. Positions 257–271 are enriched in polar residues; sequence IAGITNPTSRSSSPI. Positions 294–332 are enriched in low complexity; that stretch reads NSNSSSGGGNNNNKSISTPSSPIISRPITNKINNNNNNN. Polar residues predominate over residues 333-342; that stretch reads QPQLHYNQPQ. Low complexity predominate over residues 536–548; sequence MESSTTTTLLSEN. Acidic residues predominate over residues 589 to 613; sequence QPEDDPFFDFEDLSDDDDSNDNDDE. Low complexity predominate over residues 844–864; it reads NSSGSGNNSNDNSGSSSPSSS. The segment covering 865-880 has biased composition (polar residues); that stretch reads KTNTLNQQSICIKSEI.

This is an uncharacterized protein from Dictyostelium discoideum (Social amoeba).